The sequence spans 6359 residues: Bacitracin synthase 3 (6359 aa).

The domain 1 (isoleucine-activating) stretch occupies residues 461–1034 (LHELFEEQAM…IKGLGEYIRS (574 aa)). The segment covering 941 to 953 (VDRKALPEPDRTA) has biased composition (basic and acidic residues). The interval 941–962 (VDRKALPEPDRTAGAENEYEAP) is disordered. 5 consecutive Carrier domains span residues 961 to 1036 (APRN…RSTK), 1993 to 2067 (APRN…KKQS), 3497 to 3572 (APRN…ESMK), 4539 to 4613 (PPRN…KAES), and 6047 to 6122 (PPRH…KHAQ). An O-(pantetheine 4'-phosphoryl)serine mark is found at Ser996, Ser2028, and Ser3532. Positions 1517 to 2064 (FEDQTLTYRQ…RIKDLAKYVK (548 aa)) are domain 2 (D-phenylalanine-activating). The interval 2999-3570 (NKTIHQLFEE…IKDIGDFIES (572 aa)) is domain 3 (histidine-activating). The domain 4 (D-aspartic acid-activating) stretch occupies residues 4047 to 4612 (EQTAVVYADE…KSLSRYVKAE (566 aa)). A disordered region spans residues 4521–4544 (IDTAALPEPQPGKETEYEPPRNET). Over residues 4531 to 4544 (PGKETEYEPPRNET) the composition is skewed to basic and acidic residues. Ser4574 and Ser6082 each carry O-(pantetheine 4'-phosphoryl)serine. The domain 5 (asparagine-activating) stretch occupies residues 5549–6129 (IHRLFEEQAE…HAQDLLKDYT (581 aa)).

It belongs to the ATP-dependent AMP-binding enzyme family. In terms of assembly, large multienzyme complex of BA1, BA2 and BA3. Pantetheine 4'-phosphate serves as cofactor.

The enzyme catalyses L-aspartate = D-aspartate. It carries out the reaction L-phenylalanine + ATP + H2O = D-phenylalanine + AMP + diphosphate + H(+). The protein operates within antibiotic biosynthesis; bacitracin biosynthesis. Induces peptide synthesis, activates and incorporates five amino acids, forms a thiazoline ring between the first two amino acids and incorporates a D-glutamine in the fourth position. This is Bacitracin synthase 3 (bacC) from Bacillus licheniformis.